Here is a 193-residue protein sequence, read N- to C-terminus: CASP-like protein 1D1 (193 aa).

Residues 1–30 (MASTDKHGDTEYRTSSSTPAPAGVDYFKFD) are Cytoplasmic-facing. The chain crosses the membrane as a helical span at residues 31–51 (VILRFVLFAASLVAVVVIVTG). Asn52 is a glycosylation site (N-linked (GlcNAc...) asparagine). The Extracellular segment spans residues 52–73 (NQTEVILVPQPVPWPAKFRYTP). Residues 74-94 (AFVYFVAALSVTGLYSIITTL) traverse the membrane as a helical segment. Topologically, residues 95–108 (ASLFASNKPALKTK) are cytoplasmic. The helical transmembrane segment at 109–129 (LLPYFILWDALILGIIASATG) threads the bilayer. Topologically, residues 130-161 (TAGGVAYLGLKGNSHVVGWNKICHVYDKFCRH) are extracellular. A helical membrane pass occupies residues 162-182 (VGASIAVALFGSIVTVLLIWL). Topologically, residues 183 to 193 (SAYSIHSRVPK) are cytoplasmic.

This sequence belongs to the Casparian strip membrane proteins (CASP) family. In terms of assembly, homodimer and heterodimers.

The protein resides in the cell membrane. The sequence is that of CASP-like protein 1D1 from Glycine max (Soybean).